Reading from the N-terminus, the 76-residue chain is Small ribosomal subunit protein bS18 (76 aa).

The protein belongs to the bacterial ribosomal protein bS18 family. As to quaternary structure, part of the 30S ribosomal subunit. Forms a tight heterodimer with protein bS6.

Its function is as follows. Binds as a heterodimer with protein bS6 to the central domain of the 16S rRNA, where it helps stabilize the platform of the 30S subunit. In Pelotomaculum thermopropionicum (strain DSM 13744 / JCM 10971 / SI), this protein is Small ribosomal subunit protein bS18.